Reading from the N-terminus, the 385-residue chain is Leucine aminopeptidase 1 (385 aa).

The N-terminal stretch at 1–19 is a signal peptide; it reads MKFPNLLSLGVAASTTVLA. Residues 20-87 constitute a propeptide that is removed on maturation; sequence AVPNQKPIGD…FPRTFAQTTV (68 aa). The N-linked (GlcNAc...) asparagine glycan is linked to N177. Residues H185, D204, E243, and D270 each coordinate Zn(2+). C319 and C323 are oxidised to a cystine. A Zn(2+)-binding site is contributed by H352.

This sequence belongs to the peptidase M28 family. M28E subfamily. As to quaternary structure, monomer. Zn(2+) is required as a cofactor.

Its subcellular location is the secreted. In terms of biological role, extracellular aminopeptidase that allows assimilation of proteinaceous substrates. The sequence is that of Leucine aminopeptidase 1 (LAP1) from Ajellomyces capsulatus (strain H88) (Darling's disease fungus).